Here is a 182-residue protein sequence, read N- to C-terminus: Bifunctional protein PyrR (182 aa).

The short motif at 99–111 (VILVDDVLYTGRT) is the PRPP-binding element.

Belongs to the purine/pyrimidine phosphoribosyltransferase family. PyrR subfamily. In terms of assembly, homodimer and homohexamer; in equilibrium.

It catalyses the reaction UMP + diphosphate = 5-phospho-alpha-D-ribose 1-diphosphate + uracil. In terms of biological role, regulates transcriptional attenuation of the pyrimidine nucleotide (pyr) operon by binding in a uridine-dependent manner to specific sites on pyr mRNA. This disrupts an antiterminator hairpin in the RNA and favors formation of a downstream transcription terminator, leading to a reduced expression of downstream genes. Also displays a weak uracil phosphoribosyltransferase activity which is not physiologically significant. This is Bifunctional protein PyrR from Alkaliphilus metalliredigens (strain QYMF).